A 122-amino-acid polypeptide reads, in one-letter code: Basic phospholipase A2 vipoxin B chain (122 aa).

7 disulfides stabilise this stretch: Cys26–Cys115, Cys28–Cys44, Cys43–Cys95, Cys49–Cys122, Cys50–Cys88, Cys57–Cys81, and Cys75–Cys86. Residues Tyr27, Gly29, and Gly31 each coordinate Ca(2+). His47 is a catalytic residue. Asp48 contributes to the Ca(2+) binding site. Asp89 is a catalytic residue.

It belongs to the phospholipase A2 family. Group II subfamily. D49 sub-subfamily. In terms of assembly, heterodimer of A (AC P04084) and B chains; non-covalently linked. The A chain (acidic) is non-toxic, and increases the toxicity of the B chain (basic). The A chain may act as factor stabilizing the complex structure and hence retaining its toxicity by preventing non-specific binding. Upon binding to the target membranes the A chain is postulated to dissociate. It depends on Ca(2+) as a cofactor. As to expression, expressed by the venom gland.

Its subcellular location is the secreted. The enzyme catalyses a 1,2-diacyl-sn-glycero-3-phosphocholine + H2O = a 1-acyl-sn-glycero-3-phosphocholine + a fatty acid + H(+). In terms of biological role, heterodimer: postsynaptic neurotoxin. Its function is as follows. Monomer: snake venom phospholipase A2 (PLA2) that shows hemolytic activity and inhibition of platelet aggregation. The hemolytic activity occurs only in presence of fatty acids (unsaturated fatty acids facilitate induce a strong hemolytic activity, whereas saturated fatty acids induce a slight activity). The inhibition of platelet aggregation is almost maximal when aggregation is induced by collagen, and arachidonic acid, whereas it is only of 30% when the aggregation is induced by ADP. PLA2 catalyzes the calcium-dependent hydrolysis of the 2-acyl groups in 3-sn-phosphoglycerides. The polypeptide is Basic phospholipase A2 vipoxin B chain (Vipera ammodytes meridionalis (Eastern sand viper)).